A 542-amino-acid chain; its full sequence is CTP synthase (542 aa).

An amidoligase domain region spans residues 1-265; sequence MARYIFITGG…DSEVLCAFGI (265 aa). A CTP-binding site is contributed by Ser-13. Residue Ser-13 participates in UTP binding. 14–19 is a binding site for ATP; sequence SLGKGI. Position 54 (Tyr-54) interacts with L-glutamine. Asp-71 serves as a coordination point for ATP. 2 residues coordinate Mg(2+): Asp-71 and Glu-139. Residues 146–148, 186–191, and Lys-222 contribute to the CTP site; these read DIE and KTKPTQ. UTP-binding positions include 186 to 191 and Lys-222; that span reads KTKPTQ. A Glutamine amidotransferase type-1 domain is found at 291-541; sequence TIAVVGKYTG…IEATVEQSRL (251 aa). Ala-353 is an L-glutamine binding site. The Nucleophile; for glutamine hydrolysis role is filled by Cys-380. Residues 381–384, Glu-404, and Arg-469 contribute to the L-glutamine site; that span reads FGMQ. Catalysis depends on residues His-514 and Glu-516.

This sequence belongs to the CTP synthase family. Homotetramer.

The enzyme catalyses UTP + L-glutamine + ATP + H2O = CTP + L-glutamate + ADP + phosphate + 2 H(+). It catalyses the reaction L-glutamine + H2O = L-glutamate + NH4(+). It carries out the reaction UTP + NH4(+) + ATP = CTP + ADP + phosphate + 2 H(+). The protein operates within pyrimidine metabolism; CTP biosynthesis via de novo pathway; CTP from UDP: step 2/2. Its activity is regulated as follows. Allosterically activated by GTP, when glutamine is the substrate; GTP has no effect on the reaction when ammonia is the substrate. The allosteric effector GTP functions by stabilizing the protein conformation that binds the tetrahedral intermediate(s) formed during glutamine hydrolysis. Inhibited by the product CTP, via allosteric rather than competitive inhibition. In terms of biological role, catalyzes the ATP-dependent amination of UTP to CTP with either L-glutamine or ammonia as the source of nitrogen. Regulates intracellular CTP levels through interactions with the four ribonucleotide triphosphates. The chain is CTP synthase from Bartonella quintana (strain Toulouse) (Rochalimaea quintana).